The following is a 185-amino-acid chain: UPF0301 protein HCH_00550 (185 aa).

The protein belongs to the UPF0301 (AlgH) family.

The sequence is that of UPF0301 protein HCH_00550 from Hahella chejuensis (strain KCTC 2396).